We begin with the raw amino-acid sequence, 461 residues long: Protein FAM124B (461 aa).

At S49 the chain carries Phosphoserine. Positions 302 to 346 are disordered; that stretch reads VELPEPGGRPVSDGSSNTWWKSAGGSAQPSSPATESQPQLSSLHL. The span at 323-334 shows a compositional bias: low complexity; it reads SAGGSAQPSSPA.

This sequence belongs to the FAM124 family. In terms of assembly, interacts with CHD7 and CHD8.

Its subcellular location is the nucleus. The sequence is that of Protein FAM124B (FAM124B) from Bos taurus (Bovine).